A 398-amino-acid polypeptide reads, in one-letter code: Tryptophan synthase beta chain (398 aa).

N6-(pyridoxal phosphate)lysine is present on lysine 88.

The protein belongs to the TrpB family. In terms of assembly, tetramer of two alpha and two beta chains. Pyridoxal 5'-phosphate is required as a cofactor.

The catalysed reaction is (1S,2R)-1-C-(indol-3-yl)glycerol 3-phosphate + L-serine = D-glyceraldehyde 3-phosphate + L-tryptophan + H2O. It functions in the pathway amino-acid biosynthesis; L-tryptophan biosynthesis; L-tryptophan from chorismate: step 5/5. Its function is as follows. The beta subunit is responsible for the synthesis of L-tryptophan from indole and L-serine. The sequence is that of Tryptophan synthase beta chain from Actinobacillus succinogenes (strain ATCC 55618 / DSM 22257 / CCUG 43843 / 130Z).